Here is a 351-residue protein sequence, read N- to C-terminus: Photosystem II D2 protein (351 aa).

The helical transmembrane segment at 39–59 (CAYLAVGGWLTGTTFVTSWYT) threads the bilayer. A chlorophyll a-binding site is contributed by His-116. Residues 123–139 (GFCLRQFEIARLVGLRP) form a helical membrane-spanning segment. Positions 128 and 141 each coordinate pheophytin a. A helical transmembrane segment spans residues 151 to 164 (VFVSVFLMYPLGQA). Residue His-196 coordinates chlorophyll a. Residues 206–226 (GALLCAIHGATVQNTLFEDGD) traverse the membrane as a helical segment. Positions 213 and 260 each coordinate a plastoquinone. His-213 is a Fe cation binding site. A Fe cation-binding site is contributed by His-267. The helical transmembrane segment at 277–293 (GLWTSAFGIVGLALNLR) threads the bilayer.

The protein belongs to the reaction center PufL/M/PsbA/D family. PSII is composed of 1 copy each of membrane proteins PsbA, PsbB, PsbC, PsbD, PsbE, PsbF, PsbH, PsbI, PsbJ, PsbK, PsbL, PsbM, PsbT, PsbX, PsbY, PsbZ, Psb30/Ycf12, at least 3 peripheral proteins of the oxygen-evolving complex and a large number of cofactors. It forms dimeric complexes. It depends on The D1/D2 heterodimer binds P680, chlorophylls that are the primary electron donor of PSII, and subsequent electron acceptors. It shares a non-heme iron and each subunit binds pheophytin, quinone, additional chlorophylls, carotenoids and lipids. There is also a Cl(-1) ion associated with D1 and D2, which is required for oxygen evolution. The PSII complex binds additional chlorophylls, carotenoids and specific lipids. as a cofactor.

Its subcellular location is the plastid. The protein localises to the chloroplast thylakoid membrane. The catalysed reaction is 2 a plastoquinone + 4 hnu + 2 H2O = 2 a plastoquinol + O2. Functionally, photosystem II (PSII) is a light-driven water:plastoquinone oxidoreductase that uses light energy to abstract electrons from H(2)O, generating O(2) and a proton gradient subsequently used for ATP formation. It consists of a core antenna complex that captures photons, and an electron transfer chain that converts photonic excitation into a charge separation. The D1/D2 (PsbA/PsbD) reaction center heterodimer binds P680, the primary electron donor of PSII as well as several subsequent electron acceptors. D2 is needed for assembly of a stable PSII complex. This chain is Photosystem II D2 protein, found in Porphyra purpurea (Red seaweed).